We begin with the raw amino-acid sequence, 109 residues long: Nucleoid-associated protein Sputw3181_1707 (109 aa).

It belongs to the YbaB/EbfC family. Homodimer.

It localises to the cytoplasm. It is found in the nucleoid. Functionally, binds to DNA and alters its conformation. May be involved in regulation of gene expression, nucleoid organization and DNA protection. The polypeptide is Nucleoid-associated protein Sputw3181_1707 (Shewanella sp. (strain W3-18-1)).